Here is a 211-residue protein sequence, read N- to C-terminus: ATP phosphoribosyltransferase (211 aa).

This sequence belongs to the ATP phosphoribosyltransferase family. Short subfamily. Heteromultimer composed of HisG and HisZ subunits.

Its subcellular location is the cytoplasm. The enzyme catalyses 1-(5-phospho-beta-D-ribosyl)-ATP + diphosphate = 5-phospho-alpha-D-ribose 1-diphosphate + ATP. It participates in amino-acid biosynthesis; L-histidine biosynthesis; L-histidine from 5-phospho-alpha-D-ribose 1-diphosphate: step 1/9. Functionally, catalyzes the condensation of ATP and 5-phosphoribose 1-diphosphate to form N'-(5'-phosphoribosyl)-ATP (PR-ATP). Has a crucial role in the pathway because the rate of histidine biosynthesis seems to be controlled primarily by regulation of HisG enzymatic activity. This is ATP phosphoribosyltransferase from Ectopseudomonas mendocina (strain ymp) (Pseudomonas mendocina).